A 708-amino-acid chain; its full sequence is F-box protein MAX2 homolog A (708 aa).

An F-box domain is found at 2-49 (ATQLNDLPDVILSNIIAAVTDVRSRNSTSFVCRKWLVLERSTRVSLTL).

Part of a putative SCF (SKP1/Cullin/F-box) ubiquitin ligase complex. Interacts with DAD2. Interacts with KAI2IA in the presence of (-)-germacrene D. In terms of tissue distribution, mainly expressed in fully expanded leaves, lateral roots, axillary and shoot apex, and, to a lower extent, in internodes and nodes.

It localises to the nucleus. Functionally, component of SCF(ASK-cullin-F-box) E3 ubiquitin ligase complexes, which may mediate the ubiquitination and subsequent proteasomal degradation of target proteins. Is necessary for responses to strigolactones and may be involved in the ubiquitin-mediated degradation of specific proteins that activate axillary growth. Targets probably SMAX1A to degradation upon the formation of an E3 SCF ubiquitin ligase complex (ASK-cullin-F-box) containing MAX2A and KAI2IA in response to (-)-germacrene D in the stigma. The polypeptide is F-box protein MAX2 homolog A (Petunia hybrida (Petunia)).